Reading from the N-terminus, the 578-residue chain is MKDTIRQLIQQALTQLVNDGVLPEGLSPAIQVENARDKTHGDFASNIAMMLAKPAGMKPRDLAEKLINALPASADISKVEIAGPGFLNFFQNTDALANRLDAALADARLGVRKAGPSEKVVIDMSAPNLAKEMHVGHLRSTIIGDSVARVLEFLGDNVIRQNHVGDWGTQFGMLMAYLQENPITSDELSDLENFYRAAKKRFDESEEFATRARGLVVKLQAGDPECLALWTRFKDISLSHCQKTYELLNVKLTMADVMGESAYNDDLANVVADLKAKGLLVESQGAQCVFLEEFKNSEGEPLPVIVQKADGGYLYATTDLAAVRYRSNVLNADRALYFVDQRQALHFNQVFEVARRAGFVGHPMQMEHMGFGTMNGADGRPFKTRDGGTVKLIDLLTEAKERAYALVKEKNPSLTEAELRHIGEVVGIGAVKYADLSKHRTSDYSFNFELMLNFEGNTAPYLLYAYTRVAGVFRKLGKGFDEVEGNIVLQAAHEQDLAARLAQFGEILNNVADKGTPHVLCSYLYDLAGLFSSFYENCPILAAETLEQQQSRLRLAALTGRTLKQGLELLGLETLERM.

The short motif at 127–137 (PNLAKEMHVGH) is the 'HIGH' region element.

It belongs to the class-I aminoacyl-tRNA synthetase family. Monomer.

Its subcellular location is the cytoplasm. It catalyses the reaction tRNA(Arg) + L-arginine + ATP = L-arginyl-tRNA(Arg) + AMP + diphosphate. The chain is Arginine--tRNA ligase from Pseudomonas putida (strain GB-1).